The following is a 432-amino-acid chain: Adenylosuccinate synthetase (432 aa).

Residues 12–18 (GDEGKGK) and 40–42 (GHT) contribute to the GTP site. Asp13 functions as the Proton acceptor in the catalytic mechanism. Asp13 and Gly40 together coordinate Mg(2+). Residues 13–16 (DEGK), 38–41 (NAGH), Thr130, Arg144, Gln225, Thr240, and Arg304 contribute to the IMP site. Residue His41 is the Proton donor of the active site. Residue 300-306 (ATTGRPR) coordinates substrate. Residues Arg306, 332-334 (KLD), and 414-416 (SVG) contribute to the GTP site.

The protein belongs to the adenylosuccinate synthetase family. Homodimer. The cofactor is Mg(2+).

The protein resides in the cytoplasm. The enzyme catalyses IMP + L-aspartate + GTP = N(6)-(1,2-dicarboxyethyl)-AMP + GDP + phosphate + 2 H(+). The protein operates within purine metabolism; AMP biosynthesis via de novo pathway; AMP from IMP: step 1/2. Plays an important role in the de novo pathway of purine nucleotide biosynthesis. Catalyzes the first committed step in the biosynthesis of AMP from IMP. This Anaeromyxobacter dehalogenans (strain 2CP-C) protein is Adenylosuccinate synthetase.